We begin with the raw amino-acid sequence, 316 residues long: Putative ring-cleaving dioxygenase MhqA (316 aa).

VOC domains lie at Gly5–Asp131 and Gly154–Asp278. His8, His226, and Glu274 together coordinate Fe cation.

This sequence belongs to the extradiol ring-cleavage dioxygenase family. The cofactor is Fe(2+).

Its subcellular location is the cytoplasm. In terms of biological role, putative ring-cleavage dioxygenase that may contribute to the degradation of aromatic compounds. This Bacillus subtilis (strain 168) protein is Putative ring-cleaving dioxygenase MhqA (mhqA).